Here is a 578-residue protein sequence, read N- to C-terminus: A-type ATP synthase subunit A (578 aa).

An ATP-binding site is contributed by 228–235; the sequence is GPFGSGKT.

It belongs to the ATPase alpha/beta chains family. As to quaternary structure, has multiple subunits with at least A(3), B(3), C, D, E, F, H, I and proteolipid K(x).

The protein resides in the cell membrane. It catalyses the reaction ATP + H2O + 4 H(+)(in) = ADP + phosphate + 5 H(+)(out). Its function is as follows. Component of the A-type ATP synthase that produces ATP from ADP in the presence of a proton gradient across the membrane. The A chain is the catalytic subunit. This Methanosarcina barkeri (strain Fusaro / DSM 804) protein is A-type ATP synthase subunit A.